The following is a 122-amino-acid chain: Small ribosomal subunit protein uS13 (122 aa).

The tract at residues 93–122 is disordered; the sequence is RRGLPVRGQRTKTNARTRKGPKKTIAGKKK.

Belongs to the universal ribosomal protein uS13 family. In terms of assembly, part of the 30S ribosomal subunit. Forms a loose heterodimer with protein S19. Forms two bridges to the 50S subunit in the 70S ribosome.

In terms of biological role, located at the top of the head of the 30S subunit, it contacts several helices of the 16S rRNA. In the 70S ribosome it contacts the 23S rRNA (bridge B1a) and protein L5 of the 50S subunit (bridge B1b), connecting the 2 subunits; these bridges are implicated in subunit movement. Contacts the tRNAs in the A and P-sites. The polypeptide is Small ribosomal subunit protein uS13 (Corynebacterium urealyticum (strain ATCC 43042 / DSM 7109)).